The following is a 132-amino-acid chain: Fatty acid-binding protein, intestinal (132 aa).

The residue at position 2 (A2) is an N-acetylalanine. Residues W83 and R107 each contribute to the hexadecanoate site. Residues W83 and R107 each contribute to the tetradecanoate site.

Belongs to the calycin superfamily. Fatty-acid binding protein (FABP) family. As to expression, expressed in the small intestine. Expression in the mucosal cells of the ileum extends from the midvillar region to the villus tips.

It is found in the cytoplasm. Its function is as follows. FABPs are thought to play a role in the intracellular transport of long-chain fatty acids and their acyl-CoA esters. FABP2 is probably involved in triglyceride-rich lipoprotein synthesis. Binds saturated long-chain fatty acids with a high affinity, but binds with a lower affinity to unsaturated long-chain fatty acids. FABP2 may also help maintain energy homeostasis by functioning as a lipid sensor. This is Fatty acid-binding protein, intestinal (Fabp2) from Rattus norvegicus (Rat).